The sequence spans 452 residues: MKETIVAQATAPGRGGIGILRVSGPLATEVAQAILGKCPKPRMADYLPFKDADGTILDQGIALYFKSPNSFTGEDVLELQGHGGQVVLDLLLKRILQIDGIRLARPGEFSEQAFLNDKLDLAQAEAIADLIDATSEQAARSALKSLQGEFSKKVNELVDSVIYLRTYVEASIDFPDEEIDFLADGKIEANLRGIINQLENVRSEAKQGSILREGMKVVIAGRPNAGKSSLLNALAGREAAIVTDIAGTTRDVLREHIHIDGMPLHIIDTAGLRDATDEVERIGISRAWTEIEQADRIILMLDSSDPESADLSKVRSEFLAKLPSTLPVTIVRNKIDLNGEQASESEEGGYQIISLSAQTHDGVKLLREHLKQAMGFQTGIEGGFLARRRHLDALEKAAEHLQIGLVQLTEFHAGELLAEELRLVQSYLSEITGQFTSDDLLGNIFSSFCIGK.

3 residues coordinate (6S)-5-formyl-5,6,7,8-tetrahydrofolate: R21, E78, and K118. A TrmE-type G domain is found at 214–375 (GMKVVIAGRP…LREHLKQAMG (162 aa)). K(+) is bound at residue N224. GTP contacts are provided by residues 224–229 (NAGKSS), 243–249 (TDIAGTT), and 268–271 (DTAG). Mg(2+) is bound at residue S228. T243, I245, and T248 together coordinate K(+). Residue T249 participates in Mg(2+) binding. Residue K452 coordinates (6S)-5-formyl-5,6,7,8-tetrahydrofolate.

Belongs to the TRAFAC class TrmE-Era-EngA-EngB-Septin-like GTPase superfamily. TrmE GTPase family. In terms of assembly, homodimer. Heterotetramer of two MnmE and two MnmG subunits. Requires K(+) as cofactor.

It is found in the cytoplasm. Functionally, exhibits a very high intrinsic GTPase hydrolysis rate. Involved in the addition of a carboxymethylaminomethyl (cmnm) group at the wobble position (U34) of certain tRNAs, forming tRNA-cmnm(5)s(2)U34. This Haemophilus influenzae (strain PittEE) protein is tRNA modification GTPase MnmE.